Consider the following 626-residue polypeptide: tRNA uridine 5-carboxymethylaminomethyl modification enzyme MnmG (626 aa).

An FAD-binding site is contributed by 13 to 18 (GGGHAG). An NAD(+)-binding site is contributed by 273–287 (GPRYCPSIEDKIHRF).

Belongs to the MnmG family. Homodimer. Heterotetramer of two MnmE and two MnmG subunits. It depends on FAD as a cofactor.

The protein localises to the cytoplasm. In terms of biological role, NAD-binding protein involved in the addition of a carboxymethylaminomethyl (cmnm) group at the wobble position (U34) of certain tRNAs, forming tRNA-cmnm(5)s(2)U34. The polypeptide is tRNA uridine 5-carboxymethylaminomethyl modification enzyme MnmG (Acinetobacter baumannii (strain SDF)).